The sequence spans 510 residues: UDP-N-acetylmuramoyl-tripeptide--D-alanyl-D-alanine ligase (510 aa).

An ATP-binding site is contributed by 136–142 (GSSGKTS).

The protein belongs to the MurCDEF family. MurF subfamily.

The protein resides in the cytoplasm. The enzyme catalyses D-alanyl-D-alanine + UDP-N-acetyl-alpha-D-muramoyl-L-alanyl-gamma-D-glutamyl-meso-2,6-diaminopimelate + ATP = UDP-N-acetyl-alpha-D-muramoyl-L-alanyl-gamma-D-glutamyl-meso-2,6-diaminopimeloyl-D-alanyl-D-alanine + ADP + phosphate + H(+). The protein operates within cell wall biogenesis; peptidoglycan biosynthesis. In terms of biological role, involved in cell wall formation. Catalyzes the final step in the synthesis of UDP-N-acetylmuramoyl-pentapeptide, the precursor of murein. The chain is UDP-N-acetylmuramoyl-tripeptide--D-alanyl-D-alanine ligase from Mycobacterium tuberculosis (strain CDC 1551 / Oshkosh).